Consider the following 928-residue polypeptide: Diacylglycerol kinase zeta (928 aa).

The segment covering Met-1–Asp-14 has biased composition (basic and acidic residues). Disordered regions lie at residues Met-1–Pro-46 and Lys-59–Gln-82. Over residues Ser-15–Gly-24 the composition is skewed to low complexity. Over residues Ser-25–Pro-37 the composition is skewed to basic and acidic residues. 2 Phorbol-ester/DAG-type zinc fingers span residues His-98–Cys-152 and His-172–Cys-230. Residues Pro-251–Trp-280 are disordered. The span at Ala-257–Lys-272 shows a compositional bias: basic residues. The tract at residues Lys-259–Lys-273 is MARCKS homology. The interval Gly-278–Leu-416 is mediates interaction with RASGRP1. The DAGKc domain maps to Pro-291–Pro-425. Residues Leu-361–Leu-369 carry the Nuclear export signal motif. At Ser-705 the chain carries Phosphoserine. Positions Ala-759–Pro-788 are disordered. Residues Leu-763 to Pro-777 are compositionally biased toward pro residues. Position 781 is a phosphoserine (Ser-781). ANK repeat units follow at residues Gln-822–Asp-852 and Asn-857–Lys-886. Positions Gln-924–Val-928 match the PDZ-binding motif.

This sequence belongs to the eukaryotic diacylglycerol kinase family. As to quaternary structure, interacts (via PDZ-binding motif) with the PDZ domain of the syntrophin SNTG1 and that of SNX27. Interacts with IRS1 in the absence of insulin; insulin stimulation decreases this interaction. Found in a ternary complex with IRS1 and PIP5K1A in the absence of insulin. Interacts with PIP5K1A. In terms of assembly, forms a signaling complex with RASGRP1 and HRAS. Post-translationally, phosphorylation of the MARCKS homology domain by PKC reduces nuclear accumulation of DGK-zeta. As to expression, highest levels in brain, and substantial levels in skeletal muscle, heart, and pancreas. In terms of tissue distribution, predominantly expressed in muscle.

It is found in the nucleus. Its subcellular location is the cytoplasm. The protein localises to the cytosol. It localises to the cell membrane. The protein resides in the cell projection. It is found in the lamellipodium. The enzyme catalyses a 1,2-diacyl-sn-glycerol + ATP = a 1,2-diacyl-sn-glycero-3-phosphate + ADP + H(+). It catalyses the reaction a 1-O-alkyl-sn-glycerol + ATP = a 1-O-alkyl-sn-glycero-3-phosphate + ADP + H(+). The catalysed reaction is 1-O-alkyl-2-acyl-sn-glycerol + ATP = 1-O-alkyl-2-acyl-sn-glycero-3-phosphate + ADP + H(+). It carries out the reaction 1,2-didecanoyl-sn-glycerol + ATP = 1,2-didecanoyl-sn-glycero-3-phosphate + ADP + H(+). The enzyme catalyses 1,2-ditetradecanoyl-sn-glycerol + ATP = 1,2-ditetradecanoyl-sn-glycero-3-phosphate + ADP + H(+). It catalyses the reaction 1-hexadecanoyl-2-(9Z-octadecenoyl)-sn-glycerol + ATP = 1-hexadecanoyl-2-(9Z-octadecenoyl)-sn-glycero-3-phosphate + ADP + H(+). The catalysed reaction is 1-hexadecanoyl-2-(5Z,8Z,11Z,14Z-eicosatetraenoyl)-sn-glycerol + ATP = 1-hexadecanoyl-2-(5Z,8Z,11Z,14Z-eicosatetraenoyl)-sn-glycero-3-phosphate + ADP + H(+). It carries out the reaction 1-octadecanoyl-2-(9Z-octadecenoyl)-sn-glycerol + ATP = 1-octadecanoyl-2-(9Z-octadecenoyl)-sn-glycero-3-phosphate + ADP + H(+). The enzyme catalyses 1-octadecanoyl-2-(5Z,8Z,11Z,14Z-eicosatetraenoyl)-sn-glycerol + ATP = 1-octadecanoyl-2-(5Z,8Z,11Z,14Z-eicosatetraenoyl)-sn-glycero-3-phosphate + ADP + H(+). It catalyses the reaction 1-octadecanoyl-2-(4Z,7Z,10Z,13Z,16Z,19Z-docosahexaenoyl)-sn-glycerol + ATP = 1-octadecanoyl-2-(4Z,7Z,10Z,13Z,16Z,19Z-docosahexaenoyl)-sn-glycero-3-phosphate + ADP + H(+). The catalysed reaction is 1,2-di-(9Z-octadecenoyl)-sn-glycerol + ATP = 1,2-di-(9Z-octadecenoyl)-sn-glycero-3-phosphate + ADP + H(+). It carries out the reaction 1-(9Z-octadecenoyl)-2-hexadecanoyl-sn-glycerol + ATP = 1-(9Z)-octadecenoyl-2-hexadecanoyl-sn-glycero-3-phosphate + ADP + H(+). The enzyme catalyses 1-eicosanoyl-2-(5Z,8Z,11Z,14Z)-eicosatetraenoyl-sn-glycerol + ATP = 1-eicosanoyl-2-(5Z,8Z,11Z,14Z)-eicosatetraenoyl-sn-glycero-3-phosphate + ADP + H(+). It catalyses the reaction 1,2-di-(5Z,8Z,11Z,14Z)-eicosatetraenoyl-sn-glycerol + ATP = 1,2-di-(5Z,8Z,11Z,14Z)-eicosatetraenoyl-sn-glycero-3-phosphate + ADP + H(+). The catalysed reaction is 1-O-hexadecyl-2-acetyl-sn-glycerol + ATP = 1-O-hexadecyl-2-acetyl-sn-glycero-3-phosphate + ADP + H(+). It carries out the reaction 1-O-hexadecyl-2-(5Z,8Z,11Z,14Z-eicosatetraenoyl)-sn-glycerol + ATP = 1-O-hexadecyl-2-(5Z,8Z,11Z,14Z-eicosatetraenoyl)-sn-glycero-3-phosphate + ADP + H(+). The enzyme catalyses 1-O-hexadecyl-2-(9Z-octadecenoyl)-sn-glycerol + ATP = 1-O-hexadecyl-2-(9Z-octadecenoyl)-sn-glycero-3-phosphate + ADP + H(+). It catalyses the reaction 1-O-hexadecyl-sn-glycerol + ATP = 1-O-hexadecyl-sn-glycero-3-phosphate + ADP + H(+). The protein operates within lipid metabolism; glycerolipid metabolism. With respect to regulation, activated by 1,2-diacyl-sn-glycero-3-phosphate/phosphatidic acid irrespective of its acyl chain composition. Its function is as follows. Diacylglycerol kinase that converts diacylglycerol/DAG into phosphatidic acid/phosphatidate/PA and regulates the respective levels of these two bioactive lipids. Thereby, acts as a central switch between the signaling pathways activated by these second messengers with different cellular targets and opposite effects in numerous biological processes. Also plays an important role in the biosynthesis of complex lipids. Does not exhibit an acyl chain-dependent substrate specificity among diacylglycerol species. Can also phosphorylate 1-alkyl-2-acylglycerol in vitro but less efficiently and with a preference for alkylacylglycerols containing an arachidonoyl group. The biological processes it is involved in include T cell activation since it negatively regulates T-cell receptor signaling which is in part mediated by diacylglycerol. By generating phosphatidic acid, stimulates PIP5KIA activity which regulates actin polymerization. Through the same mechanism could also positively regulate insulin-induced translocation of SLC2A4 to the cell membrane. Functionally, regulates RASGRP1 activity. Does not regulate RASGRP1 activity. In Homo sapiens (Human), this protein is Diacylglycerol kinase zeta.